We begin with the raw amino-acid sequence, 134 residues long: ATP synthase epsilon chain, chloroplastic (134 aa).

The protein belongs to the ATPase epsilon chain family. As to quaternary structure, F-type ATPases have 2 components, CF(1) - the catalytic core - and CF(0) - the membrane proton channel. CF(1) has five subunits: alpha(3), beta(3), gamma(1), delta(1), epsilon(1). CF(0) has three main subunits: a, b and c.

The protein resides in the plastid. Its subcellular location is the chloroplast thylakoid membrane. Functionally, produces ATP from ADP in the presence of a proton gradient across the membrane. This is ATP synthase epsilon chain, chloroplastic from Chlorella vulgaris (Green alga).